Consider the following 626-residue polypeptide: Chaperone protein HtpG (626 aa).

The interval 1-339 (MSTNQETRGF…SNDLPLNVSR (339 aa)) is a; substrate-binding. Positions 340–555 (EILQDNKVTA…NDQMTTQMAK (216 aa)) are b. The interval 556–626 (LFAAAGQPVP…FIKRVNSLLS (71 aa)) is c.

It belongs to the heat shock protein 90 family. As to quaternary structure, homodimer.

It is found in the cytoplasm. Its function is as follows. Molecular chaperone. Has ATPase activity. This is Chaperone protein HtpG from Histophilus somni (strain 129Pt) (Haemophilus somnus).